The chain runs to 422 residues: UDP-N-acetylglucosamine 1-carboxyvinyltransferase (422 aa).

Position 22-23 (22-23 (KN)) interacts with phosphoenolpyruvate. Arg-92 provides a ligand contact to UDP-N-acetyl-alpha-D-glucosamine. Cys-116 functions as the Proton donor in the catalytic mechanism. Residue Cys-116 is modified to 2-(S-cysteinyl)pyruvic acid O-phosphothioketal. Residues 121–125 (RPIDL), Asp-307, and Leu-329 contribute to the UDP-N-acetyl-alpha-D-glucosamine site.

It belongs to the EPSP synthase family. MurA subfamily.

The protein resides in the cytoplasm. The enzyme catalyses phosphoenolpyruvate + UDP-N-acetyl-alpha-D-glucosamine = UDP-N-acetyl-3-O-(1-carboxyvinyl)-alpha-D-glucosamine + phosphate. The protein operates within cell wall biogenesis; peptidoglycan biosynthesis. Functionally, cell wall formation. Adds enolpyruvyl to UDP-N-acetylglucosamine. The polypeptide is UDP-N-acetylglucosamine 1-carboxyvinyltransferase (Sulfurovum sp. (strain NBC37-1)).